The following is a 378-amino-acid chain: Erythronate-4-phosphate dehydrogenase (378 aa).

2 residues coordinate substrate: Ser-45 and Thr-66. Residues Asp-146 and Thr-175 each contribute to the NAD(+) site. Residue Arg-208 is part of the active site. Asp-232 contacts NAD(+). Glu-237 is an active-site residue. Residue His-254 is the Proton donor of the active site. Gly-257 lines the NAD(+) pocket. Residue Tyr-258 coordinates substrate.

Belongs to the D-isomer specific 2-hydroxyacid dehydrogenase family. PdxB subfamily. Homodimer.

It is found in the cytoplasm. The enzyme catalyses 4-phospho-D-erythronate + NAD(+) = (R)-3-hydroxy-2-oxo-4-phosphooxybutanoate + NADH + H(+). It participates in cofactor biosynthesis; pyridoxine 5'-phosphate biosynthesis; pyridoxine 5'-phosphate from D-erythrose 4-phosphate: step 2/5. In terms of biological role, catalyzes the oxidation of erythronate-4-phosphate to 3-hydroxy-2-oxo-4-phosphonooxybutanoate. The chain is Erythronate-4-phosphate dehydrogenase from Escherichia coli O8 (strain IAI1).